The following is a 773-amino-acid chain: Jhy protein homolog (773 aa).

Disordered stretches follow at residues Met1–Tyr247, Trp325–Val373, Lys496–Leu526, Glu596–Arg615, and Ala713–Thr743. Polar residues predominate over residues Val10 to Pro28. Residues Ser29–Leu43 show a composition bias toward basic and acidic residues. The segment covering Glu48–Gln57 has biased composition (polar residues). The segment covering Asp59–Glu84 has biased composition (acidic residues). Residues Pro112–Lys134 are compositionally biased toward basic and acidic residues. A compositionally biased stretch (polar residues) spans Val145–Leu154. Over residues Ser216–Ser229 the composition is skewed to low complexity. A compositionally biased stretch (polar residues) spans Ser334–Ser351. Over residues Lys353–Pro369 the composition is skewed to basic residues. Residues Ser500–Ala516 are compositionally biased toward polar residues. The span at Glu598–Gln610 shows a compositional bias: low complexity. A compositionally biased stretch (basic and acidic residues) spans Ala728–Thr743.

In terms of biological role, required for the normal development of cilia in brain ependymal cells lining the ventricular surfaces. The chain is Jhy protein homolog (JHY) from Bos taurus (Bovine).